Here is a 1047-residue protein sequence, read N- to C-terminus: MMAAEAGSEEGGPVTAGAGGGGAAAGSSAYPAVCRVKIPAALPVAAAPYPGLVETGVAGTLGGGAALGSEFLGAGSVAGALGGAGLTGGGTAAGVAGAAAGVAGAAVAGPSGDMALTKLPTSLLAETLGPGGGFPPLPPPPYLPPLGAGLGTVDEGDSLDGPEYEEEEVAIPLTAPPTNQWYHGKLDRTIAEERLRQAGKSGSYLIRESDRRPGSFVLSFLSQMNVVNHFRIIAMCGDYYIGGRRFSSLSDLIGYYSHVSCLLKGEKLLYPVAPPEPVEDRRRVRAILPYTKVPDTDEISFLKGDMFIVHNELEDGWMWVTNLRTDEQGLIVEDLVEEVGREEDPHEGKIWFHGKISKQEAYNLLMTVGQVCSFLVRPSDNTPGDYSLYFRTNENIQRFKICPTPNNQFMMGGRYYNSIGDIIDHYRKEQIVEGYYLKEPVPMQDQEQVLNDTVDGKEIYNTIRRKTKDAFYKNIVKKGYLLKKGKGKRWKNLYFILEGSDAQLIYFESEKRATKPKGLIDLSVCSVYVVHDSLFGRPNCFQIVVQHFSEEHYIFYFAGETPEQAEDWMKGLQAFCNLRKSSPGTSNKRLRQVSSLVLHIEEAHKLPVKHFTNPYCNIYLNSVQVAKTHAREGQNPVWSEEFVFDDLPPDINRFEITLSNKTKKSKDPDILFMRCQLSRLQKGHATDEWFLLSSHIPLKGIEPGSLRVRARYSMEKIMPEEEYSEFKELILQKELHVVYALSHVCGQDRTLLASILLRIFLHEKLESLLLCTLNDREISMEDEATTLFRATTLASTLMEQYMKATATQFVHHALKDSILKIMESKQSCELSPSKLEKNEDVNTNLTHLLNILSELVEKIFMASEILPPTLRYIYGCLQKSVQHKWPTNTTMRTRVVSGFVFLRLICPAILNPRMFNIISDSPSPIAARTLILVAKSVQNLANLVEFGAKEPYMEGVNPFIKSNKHRMIMFLDELGNVPELPDTTEHSRTDLSRDLAALHEICVAHSDELRTLSNERGAQQHVLKKLLAITELLQQKQNQYTKTNDVR.

Residue Met-1 is modified to N-acetylmethionine. The SH2 1 domain maps to Trp-181–Val-272. The 63-residue stretch at Glu-279 to Arg-341 folds into the SH3 domain. In terms of domain architecture, SH2 2 spans Trp-351 to Val-441. The PH domain maps to Asn-474 to Asn-577. The C2 domain occupies Asn-577–Phe-690. Position 615 is a phosphotyrosine (Tyr-615). The 211-residue stretch at Lys-764–Leu-974 folds into the Ras-GAP domain. Ser-831 is modified (phosphoserine).

As to quaternary structure, interacts with SQSTM1. Interacts with SPSB1; the interaction does not promote degradation. Interacts with CAV2 (tyrosine phosphorylated form). Directly interacts with NCK1. Interacts with PDGFRB (tyrosine phosphorylated). Interacts (via SH2 domain) with the 'Tyr-9' phosphorylated form of PDPK1. Interacts with tyrosine-phosphorylated EPHB4. The N-terminus is blocked. In terms of processing, phosphorylated by SRC and LCK. The phosphorylation SRC inhibits its ability to stimulate the Ras-GTPase activity, whereas phosphorylation by LCK does not display any effect on stimulation activity. In placental villi, detected only in the trophoblast layer (cytotrophoblast and syncytiotrophoblast). Not detected in stromal, endothelial or Hofbauer cells (at protein level).

The protein resides in the cytoplasm. Its function is as follows. Inhibitory regulator of the Ras-cyclic AMP pathway. Stimulates the GTPase of normal but not oncogenic Ras p21; this stimulation may be further increased in the presence of NCK1. This Homo sapiens (Human) protein is Ras GTPase-activating protein 1 (RASA1).